The primary structure comprises 364 residues: Uroporphyrinogen decarboxylase (364 aa).

Residues 28–32, Asp-78, Tyr-160, Thr-215, and His-333 each bind substrate; that span reads RQAGR.

The protein belongs to the uroporphyrinogen decarboxylase family. As to quaternary structure, homodimer.

Its subcellular location is the cytoplasm. The catalysed reaction is uroporphyrinogen III + 4 H(+) = coproporphyrinogen III + 4 CO2. The protein operates within porphyrin-containing compound metabolism; protoporphyrin-IX biosynthesis; coproporphyrinogen-III from 5-aminolevulinate: step 4/4. Functionally, catalyzes the decarboxylation of four acetate groups of uroporphyrinogen-III to yield coproporphyrinogen-III. This is Uroporphyrinogen decarboxylase from Burkholderia mallei (strain NCTC 10247).